Here is a 232-residue protein sequence, read N- to C-terminus: 7-cyano-7-deazaguanine synthase (232 aa).

Residue 8–18 (FSGGQDSTTCL) participates in ATP binding. Zn(2+)-binding residues include C187, C196, C199, and C202.

The protein belongs to the QueC family. It depends on Zn(2+) as a cofactor.

The catalysed reaction is 7-carboxy-7-deazaguanine + NH4(+) + ATP = 7-cyano-7-deazaguanine + ADP + phosphate + H2O + H(+). It functions in the pathway purine metabolism; 7-cyano-7-deazaguanine biosynthesis. Catalyzes the ATP-dependent conversion of 7-carboxy-7-deazaguanine (CDG) to 7-cyano-7-deazaguanine (preQ(0)). The protein is 7-cyano-7-deazaguanine synthase of Vibrio parahaemolyticus serotype O3:K6 (strain RIMD 2210633).